A 321-amino-acid chain; its full sequence is Glycerol-3-phosphate dehydrogenase [NAD(P)+] (321 aa).

NADPH contacts are provided by tryptophan 15, arginine 35, and lysine 101. Sn-glycerol 3-phosphate contacts are provided by lysine 101 and glycine 129. Residue alanine 133 participates in NADPH binding. Lysine 184, aspartate 237, serine 247, arginine 248, and asparagine 249 together coordinate sn-glycerol 3-phosphate. The Proton acceptor role is filled by lysine 184. Residue arginine 248 coordinates NADPH. NADPH-binding residues include valine 268 and glutamate 270.

Belongs to the NAD-dependent glycerol-3-phosphate dehydrogenase family.

It localises to the cytoplasm. It catalyses the reaction sn-glycerol 3-phosphate + NAD(+) = dihydroxyacetone phosphate + NADH + H(+). It carries out the reaction sn-glycerol 3-phosphate + NADP(+) = dihydroxyacetone phosphate + NADPH + H(+). Its pathway is membrane lipid metabolism; glycerophospholipid metabolism. Its function is as follows. Catalyzes the reduction of the glycolytic intermediate dihydroxyacetone phosphate (DHAP) to sn-glycerol 3-phosphate (G3P), the key precursor for phospholipid synthesis. The chain is Glycerol-3-phosphate dehydrogenase [NAD(P)+] from Acidiphilium cryptum (strain JF-5).